Reading from the N-terminus, the 409-residue chain is uncharacterized protein (409 aa).

3 disordered regions span residues 12-32 (ENTE…LHCP), 133-160 (EVST…SREQ), and 194-213 (TVSS…GLST). Polar residues predominate over residues 134–160 (VSTQKSWSSEKNWSGLSQGPGTASREQ).

This is an uncharacterized protein from Mus musculus (Mouse).